The following is a 1109-amino-acid chain: Zinc finger E-box-binding homeobox 1 (1109 aa).

Disordered regions lie at residues 1-106 (MADG…DPNV) and 123-143 (PEED…NGTP). A compositionally biased stretch (low complexity) spans 15 to 30 (PRRNNVTNYNTVVEAN). Phosphoserine occurs at positions 31 and 33. The span at 87 to 98 (VKDDECDSDAEN) shows a compositional bias: acidic residues. A C2H2-type 1 zinc finger spans residues 150 to 173 (LTCPYCDRGYKRFTSLKEHIKYRH). Residues Lys-166 and Lys-175 each participate in a glycyl lysine isopeptide (Lys-Gly) (interchain with G-Cter in SUMO2) cross-link. 2 consecutive C2H2-type zinc fingers follow at residues 180-202 (FSCS…MTSH) and 220-242 (FKCT…LRIH). A C2H2-type 4; atypical zinc finger spans residues 248-272 (YECPNCKKRFSHSGSYSSHISSKKC). The interval 278 to 307 (VNGRPRSGLKTSQCSSPSLSTSPGSPTRPQ) is disordered. A Glycyl lysine isopeptide (Lys-Gly) (interchain with G-Cter in SUMO2) cross-link involves residue Lys-287. The segment covering 288–304 (TSQCSSPSLSTSPGSPT) has biased composition (low complexity). A phosphoserine mark is found at Ser-293 and Ser-302. Residues Lys-311 and Lys-315 each participate in a glycyl lysine isopeptide (Lys-Gly) (interchain with G-Cter in SUMO2) cross-link. Lys-327 is covalently cross-linked (Glycyl lysine isopeptide (Lys-Gly) (interchain with G-Cter in SUMO); alternate). Lys-327 is covalently cross-linked (Glycyl lysine isopeptide (Lys-Gly) (interchain with G-Cter in SUMO2); alternate). Residues Lys-419, Lys-473, Lys-484, Lys-495, and Lys-528 each participate in a glycyl lysine isopeptide (Lys-Gly) (interchain with G-Cter in SUMO2) cross-link. Disordered regions lie at residues 468-501 (VPQN…KDKS), 525-566 (PELK…SQPP), and 614-711 (QIPG…PQVE). Residues 483–501 (CKSEKSPEDLTVKSEKDKS) show a composition bias toward basic and acidic residues. Residues 559–618 (DLSPSQPPLKNLLSLLKAYYALNAQPSTEELTKIADSVNLPLDVVKKWFEKMQAGQIPGQ) constitute a DNA-binding region (homeobox; atypical). The span at 654–665 (RGQSPLKMTSSP) shows a compositional bias: polar residues. A phosphoserine mark is found at Ser-657, Ser-664, Ser-671, and Ser-678. Residues 673 to 703 (INGSRSCTSSPSPLNLSSARNPQGYSCVSEG) are compositionally biased toward polar residues. Thr-680 is modified (phosphothreonine). Ser-682 is subject to Phosphoserine. A Glycyl lysine isopeptide (Lys-Gly) (interchain with G-Cter in SUMO); alternate cross-link involves residue Lys-752. Residue Lys-752 forms a Glycyl lysine isopeptide (Lys-Gly) (interchain with G-Cter in SUMO2); alternate linkage. Positions 834–873 (PPVKVIQPNGNQDERQDTSSEGVSVEDQNDSDCTPPKKKT) are disordered. C2H2-type zinc fingers lie at residues 881–903 (YACD…KYEH) and 909–931 (HECG…MRLH). The segment at 937-958 (YQCDKCGKRFSHSGSYSQHMNH) adopts a C2H2-type 7; atypical zinc-finger fold. The tract at residues 968–1109 (EDRDAMEQED…RLSEEKTNEA (142 aa)) is disordered. Acidic residues predominate over residues 1012–1066 (EEDEDSEKEEEEEDKEMEELQEDKECENPQEEEEEEEEEEEEEEEEEEEEAEEAE). The span at 1071 to 1087 (AAKTGGAVEEEAAQQAG) shows a compositional bias: low complexity. Basic and acidic residues predominate over residues 1097–1109 (ESKRLSEEKTNEA).

It belongs to the delta-EF1/ZFH-1 C2H2-type zinc-finger family. As to quaternary structure, interacts (via N-terminus) with SMARCA4/BRG1. In terms of processing, ubiquitinated, leading to degradation in a proteasome-dependent manner. Deubiquitinated by USP51, leading to stabilization.

It localises to the nucleus. Functionally, acts as a transcriptional repressor. Binds to E-box sequences in the immunoglobulin heavy chain enhancer as well as in the regulatory regions of many other tissue-specific genes. Represses E-cadherin promoter and induces an epithelial-mesenchymal transition (EMT) by recruiting SMARCA4/BRG1. Represses BCL6 transcription in the presence of the corepressor CTBP1. Positively regulates neuronal differentiation. Represses RCOR1 transcription activation during neurogenesis. Represses transcription by binding to the E box (5'-CANNTG-3'). In the absence of TGFB1, acts as a repressor of COL1A2 transcription via binding to the E-box in the upstream enhancer region. In Rattus norvegicus (Rat), this protein is Zinc finger E-box-binding homeobox 1.